A 136-amino-acid chain; its full sequence is METVSVEEGLDFAPGMVSQKCLLCMCKLESGGCKPIGCRMDVGSLSCGYFQIKQPYWIDCGKPGKDWKSCSNDINCSSKCVQQYMKRYATHYRCPLNCEGFAREHNGGPNGCHSSRTLKYWELLQKIPGCKGVKFS.

An N-terminal signal peptide occupies residues 1 to 11 (METVSVEEGLD). Positions 14–130 (PGMVSQKCLL…WELLQKIPGC (117 aa)) constitute an I-type lysozyme domain. Disulfide bonds link Cys21–Cys98, Cys24–Cys130, Cys26–Cys33, Cys38–Cys47, Cys60–Cys80, Cys70–Cys76, and Cys94–Cys112. Catalysis depends on Glu29, which acts as the Proton donor. The active-site Nucleophile is Asp41. 53-59 (KQPYWID) lines the substrate pocket. N-linked (GlcNAc...) asparagine glycosylation is present at Asn75. Residues Tyr84, Tyr92, 105–107 (HNG), and Lys119 contribute to the substrate site.

In terms of assembly, homodimer in its autoinhibited state. Active as monomer.

The protein localises to the secreted. It catalyses the reaction Hydrolysis of (1-&gt;4)-beta-linkages between N-acetylmuramic acid and N-acetyl-D-glucosamine residues in a peptidoglycan and between N-acetyl-D-glucosamine residues in chitodextrins.. Its activity is regulated as follows. Chitinase activity is activated by high salt concentrations which cause the release of the monomer from the autoinhibited homodimer. In terms of biological role, bacteriolytic activity against Gram-positive bacterium M.luteus and thereby probably protects against bacterial infection. Also has chitinase activity. May act as an ispopeptidase, cleaving isopeptide bonds between the side chains of Lys and Gln residues in proteins or in the cross-linking peptide of peptidoglycan in bacterial cell walls. The polypeptide is Invertebrate-type lysozyme (Ruditapes philippinarum (Japanese carpet shell)).